We begin with the raw amino-acid sequence, 423 residues long: Adenylosuccinate synthetase (423 aa).

GTP-binding positions include 12 to 18 and 40 to 42; these read GDEGKGK and GHT. The Proton acceptor role is filled by Asp-13. Positions 13 and 40 each coordinate Mg(2+). IMP contacts are provided by residues 13 to 16, 38 to 41, Thr-129, Arg-143, Gln-221, Thr-236, and Arg-300; these read DEGK and NAGH. The Proton donor role is filled by His-41. 296 to 302 is a substrate binding site; that stretch reads SVTGRKR. GTP contacts are provided by residues Arg-302, 328–330, and 408–410; these read KSD and SVG.

The protein belongs to the adenylosuccinate synthetase family. In terms of assembly, homodimer. The cofactor is Mg(2+).

It is found in the cytoplasm. It carries out the reaction IMP + L-aspartate + GTP = N(6)-(1,2-dicarboxyethyl)-AMP + GDP + phosphate + 2 H(+). Its pathway is purine metabolism; AMP biosynthesis via de novo pathway; AMP from IMP: step 1/2. Its function is as follows. Plays an important role in the de novo pathway of purine nucleotide biosynthesis. Catalyzes the first committed step in the biosynthesis of AMP from IMP. In Bacteroides fragilis (strain ATCC 25285 / DSM 2151 / CCUG 4856 / JCM 11019 / LMG 10263 / NCTC 9343 / Onslow / VPI 2553 / EN-2), this protein is Adenylosuccinate synthetase.